Here is a 568-residue protein sequence, read N- to C-terminus: AT-rich interactive domain-containing protein 3B (568 aa).

Met1 is modified (N-acetylmethionine). Residues 1–22 (MEPLQQQQQQQQQKQPQQPLLQ) show a composition bias toward low complexity. Positions 1–174 (MEPLQQQQQQ…SVPTAGQPSW (174 aa)) are disordered. At Ser87 the chain carries Phosphoserine. A compositionally biased stretch (acidic residues) spans 88-107 (EPEEEEGGLEDEDGDDDVAE). Basic and acidic residues predominate over residues 151-160 (TKEDHTKDAS). The interval 201–374 (SRDFAKLYEL…SSPKIRFSIL (174 aa)) is interaction with RB1. The ARID domain maps to 213 to 305 (DPERKEFLDD…YLYAYECEKK (93 aa)). Ser309 is subject to Phosphoserine. At Arg370 the chain carries Asymmetric dimethylarginine. The segment at 378–403 (SSSGTSASSPRIPPASTLRKGDGVPV) is disordered. Positions 425 to 522 (GPLEHLRERL…GVLFAQKPVV (98 aa)) constitute an REKLES domain. Positions 495–518 (SNIGSINMSVDIDGTTYTGVLFAQ) are interaction with ARID3A. The segment covering 529 to 559 (TPQSIGSSASSSNSSSSHCSPSPTSSRGTPS) has biased composition (low complexity). Residues 529 to 568 (TPQSIGSSASSSNSSSSHCSPSPTSSRGTPSAEPSTSWSL) are disordered.

As to quaternary structure, heterodimer with ARID3A. Interacts with unphosphorylated RB1. As to expression, expressed at high levels in testis. Also expressed in prostate, thyroid and thymus.

It localises to the nucleus. Transcription factor involved in the production of cranial mesenchymal tissues. Favors nuclear targeting of ARID3A. This chain is AT-rich interactive domain-containing protein 3B (Arid3b), found in Mus musculus (Mouse).